We begin with the raw amino-acid sequence, 65 residues long: Antimicrobial peptide 1 (65 aa).

An N-terminal signal peptide occupies residues 1-27; the sequence is MAKVSSAYLKFALVMILLLSVISAVMS. Cystine bridges form between cysteine 30–cysteine 47, cysteine 37–cysteine 51, and cysteine 46–cysteine 62.

The protein belongs to the AMP family. As to expression, seed specific.

Its subcellular location is the secreted. Possesses antifungal activity. The sequence is that of Antimicrobial peptide 1 from Phytolacca americana (American pokeweed).